The primary structure comprises 568 residues: Periplasmic trehalase (568 aa).

An N-terminal signal peptide occupies residues 1 to 38; the sequence is MPHAPARSGDAMSAAAPPCCTSLLGLSLSMFVAPCALA. Substrate-binding positions include Arg169, 176–177, Asn213, 222–224, 294–296, and Gly327; these read WD, RSQ, and RPE. Catalysis depends on proton donor/acceptor residues Asp329 and Glu511. Glu526 is a substrate binding site.

This sequence belongs to the glycosyl hydrolase 37 family.

It localises to the periplasm. It carries out the reaction alpha,alpha-trehalose + H2O = alpha-D-glucose + beta-D-glucose. In terms of biological role, provides the cells with the ability to utilize trehalose at high osmolarity by splitting it into glucose molecules that can subsequently be taken up by the phosphotransferase-mediated uptake system. This is Periplasmic trehalase from Xanthomonas campestris pv. campestris (strain 8004).